The chain runs to 220 residues: Putative cobalt transport protein CbiM (220 aa).

6 helical membrane-spanning segments follow: residues 6–26, 45–65, 74–94, 107–127, 153–173, and 188–208; these read GFLPGIWALVWFVVAIPVISY, IAVAAAFIFVLSALKIPSVTG, GIAVVLFGPAVTAFLSAIVLL, TLGANVVSMGVVGPVAGWVVF, LVTSIQLGVAFPSGPGVAGVV, and IPIGIVEGALAAGLIGYIAMS.

This sequence belongs to the CbiM family. In terms of assembly, forms an energy-coupling factor (ECF) transporter complex composed of an ATP-binding protein (A component, CbiO), a transmembrane protein (T component, CbiQ) and 2 possible substrate-capture proteins (S components, CbiM and CbiN) of unknown stoichimetry.

The protein resides in the cell membrane. Its pathway is cofactor biosynthesis; adenosylcobalamin biosynthesis. Functionally, part of the energy-coupling factor (ECF) transporter complex CbiMNOQ involved in cobalt import. The sequence is that of Putative cobalt transport protein CbiM from Halobacterium salinarum (strain ATCC 29341 / DSM 671 / R1).